The chain runs to 96 residues: Prokineticin Bv8-like peptide 2 (96 aa).

Residues 1-19 (MKCFAQIVVLLLVIAFSHG) form the signal peptide. Disulfide bonds link cysteine 26–cysteine 38, cysteine 32–cysteine 50, cysteine 37–cysteine 78, cysteine 60–cysteine 86, and cysteine 80–cysteine 95.

The protein belongs to the AVIT (prokineticin) family. Expressed by the skin glands.

The protein resides in the secreted. Potent agonist for both PKR1/PROKR1 and PKR2/PROKR2, and inducer of a potent and long-lasting hyperalgesia. Also potentiates capsaicin-induced TRPV1 current when tested on DRG neurons. At subnanomolar concentrations, this protein both induces potent chemotaxis of macrophages and stimulates LPS-induced production of the pro-inflammatory cytokines IL-1 and IL-12. In vivo, potently stimulates the contraction of the guinea-pig gastrointestinal (GI) smooth muscle (nanomolar concentration) and rabbit aortic rings. The sequence is that of Prokineticin Bv8-like peptide 2 from Bombina maxima (Giant fire-bellied toad).